Reading from the N-terminus, the 523-residue chain is MAELTIRPEEIRDALDNFVQSYQPDAASREEVGTVSVAGDGIAKVEGLPSAMANELLKFEDGTLGLALNLEEREIGAIVLGEFSGIEEGQPVQRTGEVLSVGVGEGYLGRVVDPLGNPIDGLGEIATESRRALELQAPGVMVRKSVHEPMQTGYKAVDAMVPIGRGQRQLIIGDRQTGKTALAVDTIINQRDNWRSGDVNKQVRCIYVAIGQKGSTIASVRGALEEAGALEYTTIVAAPASDPAGFKYLAPYTGSAIGQHWMYDGKHVLIIFDDLSKQADAYRAVSLLLRRPPGREAYPGDVFYLHSRLLERCAKLSDEMGAGSMTGLPIVETKANDVSAFIPTNVISITDGQCFLESDLFNAGQRPALNVGISVSRVGGSAQHKAMKQVSGRLRVDLAQFRELEAFAAFGSDLDAASKASLERGKRMVELLKQPQYAPFPMEEQVVSVWAGTTGKMDDVPVEDIRRFEAELLEFLRRERKDLLTSIAEGGKMSDDTLQSVADAIAAFKQQFETSDGKLLGEG.

173 to 180 (GDRQTGKT) provides a ligand contact to ATP.

Belongs to the ATPase alpha/beta chains family. In terms of assembly, F-type ATPases have 2 components, CF(1) - the catalytic core - and CF(0) - the membrane proton channel. CF(1) has five subunits: alpha(3), beta(3), gamma(1), delta(1), epsilon(1). CF(0) has three main subunits: a(1), b(2) and c(9-12). The alpha and beta chains form an alternating ring which encloses part of the gamma chain. CF(1) is attached to CF(0) by a central stalk formed by the gamma and epsilon chains, while a peripheral stalk is formed by the delta and b chains.

It localises to the cell membrane. The enzyme catalyses ATP + H2O + 4 H(+)(in) = ADP + phosphate + 5 H(+)(out). Its function is as follows. Produces ATP from ADP in the presence of a proton gradient across the membrane. The alpha chain is a regulatory subunit. The protein is ATP synthase subunit alpha of Streptomyces griseus subsp. griseus (strain JCM 4626 / CBS 651.72 / NBRC 13350 / KCC S-0626 / ISP 5235).